The primary structure comprises 664 residues: Pentatricopeptide repeat-containing protein At1g10910, chloroplastic (664 aa).

Residues 1–72 (METPLLVGLE…KRHSNSYLAR (72 aa)) constitute a chloroplast transit peptide. PPR repeat units follow at residues 165-199 (NVYI…GLKP), 200-235 (DVVT…GIQM), 236-270 (DSVM…GHSP), 271-305 (NIYH…GLVP), 306-340 (NKVM…GYAE), 341-375 (NEMP…GVRS), 376-406 (DGYA…SETT), 411-445 (DLVM…AVSP), and 446-480 (DYNT…GHRL).

It belongs to the PPR family. P subfamily.

It localises to the plastid. The protein resides in the chloroplast. The chain is Pentatricopeptide repeat-containing protein At1g10910, chloroplastic from Arabidopsis thaliana (Mouse-ear cress).